Here is a 278-residue protein sequence, read N- to C-terminus: Small ribosomal subunit protein uS3 (278 aa).

Residues 38-106 form the KH type-2 domain; sequence IRKLLATGLE…QVQLNILEVK (69 aa). The interval 215–278 is disordered; sequence AAAAPAGADR…AAGQPETTES (64 aa). Positions 238–278 are enriched in low complexity; that stretch reads SGASGTTATSTDAGRAATEEAPATDAAATAPAAGQPETTES.

The protein belongs to the universal ribosomal protein uS3 family. Part of the 30S ribosomal subunit. Forms a tight complex with proteins S10 and S14.

In terms of biological role, binds the lower part of the 30S subunit head. Binds mRNA in the 70S ribosome, positioning it for translation. The chain is Small ribosomal subunit protein uS3 from Mycolicibacterium gilvum (strain PYR-GCK) (Mycobacterium gilvum (strain PYR-GCK)).